A 183-amino-acid chain; its full sequence is NAD(P)H-quinone oxidoreductase subunit I, chloroplastic (183 aa).

2 consecutive 4Fe-4S ferredoxin-type domains span residues 55-84 and 95-124; these read GRIH…VDWK and KSYS…MTEE. [4Fe-4S] cluster-binding residues include C64, C67, C70, C74, C104, C107, C110, and C114.

The protein belongs to the complex I 23 kDa subunit family. NDH is composed of at least 16 different subunits, 5 of which are encoded in the nucleus. The cofactor is [4Fe-4S] cluster.

The protein localises to the plastid. Its subcellular location is the chloroplast thylakoid membrane. The catalysed reaction is a plastoquinone + NADH + (n+1) H(+)(in) = a plastoquinol + NAD(+) + n H(+)(out). It carries out the reaction a plastoquinone + NADPH + (n+1) H(+)(in) = a plastoquinol + NADP(+) + n H(+)(out). Its function is as follows. NDH shuttles electrons from NAD(P)H:plastoquinone, via FMN and iron-sulfur (Fe-S) centers, to quinones in the photosynthetic chain and possibly in a chloroplast respiratory chain. The immediate electron acceptor for the enzyme in this species is believed to be plastoquinone. Couples the redox reaction to proton translocation, and thus conserves the redox energy in a proton gradient. The sequence is that of NAD(P)H-quinone oxidoreductase subunit I, chloroplastic from Anthoceros angustus (Hornwort).